The following is a 49-amino-acid chain: Large ribosomal subunit protein eL40 (49 aa).

It belongs to the eukaryotic ribosomal protein eL40 family.

In Methanosarcina acetivorans (strain ATCC 35395 / DSM 2834 / JCM 12185 / C2A), this protein is Large ribosomal subunit protein eL40.